The chain runs to 300 residues: Cation-efflux pump FieF (300 aa).

A helical transmembrane segment spans residues Leu24–Val44. Residues Asp45 and Asp49 each contribute to the Zn(2+) site. 2 helical membrane-spanning segments follow: residues Ala82–Ile102 and Pro114–Phe134. The Zn(2+) site is built by His153 and Asp157. Transmembrane regions (helical) follow at residues Ser156–His176 and Ala178–Gly198.

The protein belongs to the cation diffusion facilitator (CDF) transporter (TC 2.A.4) family. FieF subfamily. As to quaternary structure, homodimer.

The protein resides in the cell inner membrane. The catalysed reaction is Zn(2+)(in) + H(+)(out) = Zn(2+)(out) + H(+)(in). The enzyme catalyses Cd(2+)(in) + H(+)(out) = Cd(2+)(out) + H(+)(in). It catalyses the reaction Fe(2+)(in) + H(+)(out) = Fe(2+)(out) + H(+)(in). Divalent metal cation transporter which exports Zn(2+), Cd(2+) and possibly Fe(2+). May be involved in zinc and iron detoxification by efflux. This is Cation-efflux pump FieF from Salmonella choleraesuis (strain SC-B67).